The following is a 209-amino-acid chain: Small ribosomal subunit protein uS4 (209 aa).

The tract at residues 22–45 (RGRNPLLRKPNPPGQHGMQRKKKS) is disordered. Positions 93–154 (CRLDNIVYRL…KSKRLAIVTE (62 aa)) constitute an S4 RNA-binding domain.

This sequence belongs to the universal ribosomal protein uS4 family. Part of the 30S ribosomal subunit. Contacts protein S5. The interaction surface between S4 and S5 is involved in control of translational fidelity.

One of the primary rRNA binding proteins, it binds directly to 16S rRNA where it nucleates assembly of the body of the 30S subunit. Functionally, with S5 and S12 plays an important role in translational accuracy. The protein is Small ribosomal subunit protein uS4 of Chlamydia trachomatis serovar A (strain ATCC VR-571B / DSM 19440 / HAR-13).